We begin with the raw amino-acid sequence, 121 residues long: Small ribosomal subunit protein uS13 (121 aa).

Positions 93–121 (RNLPVRGQRTRTNARTCKGPRKSMNKQFK) are disordered. Residues 110-121 (KGPRKSMNKQFK) show a composition bias toward basic residues.

Belongs to the universal ribosomal protein uS13 family. Part of the 30S ribosomal subunit. Forms a loose heterodimer with protein S19. Forms two bridges to the 50S subunit in the 70S ribosome.

In terms of biological role, located at the top of the head of the 30S subunit, it contacts several helices of the 16S rRNA. In the 70S ribosome it contacts the 23S rRNA (bridge B1a) and protein L5 of the 50S subunit (bridge B1b), connecting the 2 subunits; these bridges are implicated in subunit movement. Contacts the tRNAs in the A and P-sites. In Blochmanniella pennsylvanica (strain BPEN), this protein is Small ribosomal subunit protein uS13.